The following is a 301-amino-acid chain: Mycothiol acetyltransferase (301 aa).

2 consecutive N-acetyltransferase domains span residues 6-151 (EWRQ…ILRD) and 153-301 (VSLR…QYGR). 79-81 (LFV) serves as a coordination point for acetyl-CoA. Positions 180, 219, and 235 each coordinate 1D-myo-inositol 2-(L-cysteinylamino)-2-deoxy-alpha-D-glucopyranoside. Acetyl-CoA-binding positions include 239 to 241 (VGV) and 246 to 252 (QGGGLGR). Tyrosine 273 provides a ligand contact to 1D-myo-inositol 2-(L-cysteinylamino)-2-deoxy-alpha-D-glucopyranoside.

It belongs to the acetyltransferase family. MshD subfamily. In terms of assembly, monomer.

It catalyses the reaction 1D-myo-inositol 2-(L-cysteinylamino)-2-deoxy-alpha-D-glucopyranoside + acetyl-CoA = mycothiol + CoA + H(+). Its function is as follows. Catalyzes the transfer of acetyl from acetyl-CoA to desacetylmycothiol (Cys-GlcN-Ins) to form mycothiol. The protein is Mycothiol acetyltransferase of Amycolatopsis mediterranei (strain U-32).